A 355-amino-acid chain; its full sequence is Syntaxin-5 (355 aa).

Residues 1 to 333 (MIPRKRYGSK…KYFQSVTSNR (333 aa)) lie on the Cytoplasmic side of the membrane. Over residues 28-37 (PATAGSSSSD) the composition is skewed to polar residues. Positions 28–51 (PATAGSSSSDIAPLPPPVTLVPPP) are disordered. Positions 40-51 (PLPPPVTLVPPP) are enriched in pro residues. Positions 245 to 247 (IDM) match the IxM motif; signal for cargo packaging into COPII-coated vesicles motif. A t-SNARE coiled-coil homology domain is found at 263–325 (DSYIQSRADT…EAAHSEILKY (63 aa)). Residues 287–318 (FQQLAHMVKEQEETIQRIDENVLGAQLDVEAA) adopt a coiled-coil conformation. The chain crosses the membrane as a helical; Anchor for type IV membrane protein span at residues 334–354 (WLMVKIFLILIVFFIIFVVFL). Position 355 (Ala-355) is a topological domain, vesicular.

Belongs to the syntaxin family. Part of a ternary complex containing STX5A, NSFL1C and VCP. Identified in a unique SNARE complex composed of the Golgi SNAREs GOSR1, GOSR2, YKT6 and VTI1A. Component of a SNARE complex consisting of STX5, YKT6, GOSR1 and BET1L. Interacts with BET1L. Interacts with BET1. Interacts with COG4. Interacts with GM130/GOLGA2. Interacts (via IxM motif) with SEC24C and SEC24D; mediates STX5 packaging into COPII-coated vesicles. Interacts with VLDLR; this interaction mediates VLDLR translocation from the endoplasmic reticulum to the plasma membrane.

The protein localises to the endoplasmic reticulum-Golgi intermediate compartment membrane. It localises to the golgi apparatus membrane. Its function is as follows. Mediates endoplasmic reticulum to Golgi transport. Together with p115/USO1 and GM130/GOLGA2, involved in vesicle tethering and fusion at the cis-Golgi membrane to maintain the stacked and inter-connected structure of the Golgi apparatus. Functionally, required for Golgi to endoplasmic reticulum retrogade transport, and for intra-Golgi transport. In terms of biological role, (Microbial infection) Required for the efficient production of infectious virion during human cytomegalovirus infection. Mechanistically, participates in the formation of the cytoplasmic viral assembly compartment where tegument acquisition and envelopment occur. The sequence is that of Syntaxin-5 (STX5) from Homo sapiens (Human).